The sequence spans 288 residues: Galactose/N-acetyl-D-galactosamine lectin light subunit 1 (288 aa).

The N-terminal stretch at 1 to 15 (MIILVLLISYSFGKT) is a signal peptide. Asn-205 and Asn-261 each carry an N-linked (GlcNAc...) asparagine glycan.

Heterodimer composed of a 170 kDa heavy subunit (hgl) and a 31/35 kDa light subunit (lgl); disulfide-linked.

It localises to the cell membrane. In terms of biological role, light subunit of a heterodimeric lectin; the heavy subunit binds galactose and N-acetyl-D-galactosamine of host glycoproteins and thus mediates adhesion to host cells. The sequence is that of Galactose/N-acetyl-D-galactosamine lectin light subunit 1 from Entamoeba histolytica (strain ATCC 30459 / HM-1:IMSS / ABRM).